A 213-amino-acid polypeptide reads, in one-letter code: Orotate phosphoribosyltransferase (213 aa).

Position 26 (K26) interacts with 5-phospho-alpha-D-ribose 1-diphosphate. Residue 34-35 (FF) coordinates orotate. 5-phospho-alpha-D-ribose 1-diphosphate contacts are provided by residues 72-73 (YK), R99, K100, K103, H105, and 124-132 (DDVITAGTA). Orotate contacts are provided by T128 and R156.

This sequence belongs to the purine/pyrimidine phosphoribosyltransferase family. PyrE subfamily. As to quaternary structure, homodimer. Mg(2+) is required as a cofactor.

It catalyses the reaction orotidine 5'-phosphate + diphosphate = orotate + 5-phospho-alpha-D-ribose 1-diphosphate. The protein operates within pyrimidine metabolism; UMP biosynthesis via de novo pathway; UMP from orotate: step 1/2. In terms of biological role, catalyzes the transfer of a ribosyl phosphate group from 5-phosphoribose 1-diphosphate to orotate, leading to the formation of orotidine monophosphate (OMP). This is Orotate phosphoribosyltransferase from Salmonella arizonae (strain ATCC BAA-731 / CDC346-86 / RSK2980).